A 123-amino-acid polypeptide reads, in one-letter code: Small ribosomal subunit protein uS12 (123 aa).

The residue at position 89 (Asp-89) is a 3-methylthioaspartic acid. The disordered stretch occupies residues 100–123; that stretch reads GSLDTSGVKGRNQGRSKYGTKKPK. Residues 111 to 123 show a composition bias toward basic residues; it reads NQGRSKYGTKKPK.

It belongs to the universal ribosomal protein uS12 family. As to quaternary structure, part of the 30S ribosomal subunit. Contacts proteins S8 and S17. May interact with IF1 in the 30S initiation complex.

Its function is as follows. With S4 and S5 plays an important role in translational accuracy. Interacts with and stabilizes bases of the 16S rRNA that are involved in tRNA selection in the A site and with the mRNA backbone. Located at the interface of the 30S and 50S subunits, it traverses the body of the 30S subunit contacting proteins on the other side and probably holding the rRNA structure together. The combined cluster of proteins S8, S12 and S17 appears to hold together the shoulder and platform of the 30S subunit. This chain is Small ribosomal subunit protein uS12, found in Pseudomonas syringae pv. syringae (strain B728a).